The primary structure comprises 6684 residues: MSSKQFKILVNEDYQVNVPSLPIRDVLQEIKYCYRNGFEGYVFVPEYCRDLVDCDRKDHYVIGVLGNGVSDLKPVLLTEPSVMLQGFIVRANCNGVLEDFDLKIARTGRGAIYVDQYMCGADGKPVIEGDFKDYFGDEDIIEFEGEEYHCAWTTVRDEKPLNQQTLFTIQEIQYNLDIPHKLPNCATRHVAPPVKKNSKIVLSEDYKKLYDIFGSPFMGNGDCLSKCFDTLHFIAATLRCPCGSESSGVGDWTGFKTACCGLSGKVKGVTLGDIKPGDAVVTSMSAGKGVKFFANCVLQYAGDVEGVSIWKVIKTFTVDETVCTPGFEGELNDFIKPESKSLVACSVKRAFITGDIDDAVHDCIITGKLDLSTNLFGNVGLLFKKTPWFVQKCGALFVDAWKVVEELCGSLTLTYKQIYEVVASLCTSAFTIVNYKPTFVVPDNRVKDLVDKCVKVLVKAFDVFTQIITIAGIEAKCFVLGAKYLLFNNALVKLVSVKILGKKQKGLECAFFATSLVGATVNVTPKRTETATISLNKVDDVVAPGEGYIVIVGDMAFYKSGEYYFMMSSPNFVLTNNVFKAVKVPSYDIVYDVDNDTKSKMIAKLGSSFEYDGDIDAAIVKVNELLIEFRQQSLCFRAFKDDKSIFVEAYFKKYKMPACLAKHIGLWNIIKKDSCKRGFLNLFNHLNELEDIKETNIQAIKNILCPDPLLDLDYGAIWYNCMPGCSDPSVLGSVQLLIGNGVKVVCDGCKGFANQLSKGYNKLCNAARNDIEIGGIPFSTFKTPTNTFIEMTDAIYSVIEQGKALSFRDADVPVVDNGTISTADWSEPILLEPAEYVKPKNNGNVIVIAGYTFYKDEDEHFYPYGFGKIVQRMYNKMGGGDKTVSFSEEVDVQEIAPVTRVKLEFEFDNEIVTGVLERAIGTRYKFTGTTWEEFEESISEELDAIFDTLANQGVELEGYFIYDTCGGFDIKNPDGIMISQYDINITADEKSEVSASSEEEEVESVEEDPENEIVEASEGAEGTSSQEEVETVEVADITSTEEDVDIVEVSAKDDPWAAAVDVQEAEQFNPSLPPFKTTNLNGKIILKQGDNNCWINACCYQLQAFDFFNNEAWEKFKKGDVMDFVNLCYAATTLARGHSGDAEYLLELMLNDYSTAKIVLAAKCGCGEKEIVLERAVFKLTPLKESFNYGVCGDCMQVNTCRFLSVEGSGVFVHDILSKQTPEAMFVVKPVMHAVYTGTTQNGHYMVDDIEHGYCVDGMGIKPLKKRCYTSTLFINANVMTRAEKPKQEFKVEKVEQQPIVEENKSSIEKEEIQSPKNDDLILPFYKAGKLSFYQGALDVLINFLEPDVIVNAANGDLKHMGGVARAIDVFTGGKLTERSKDYLKKNKSIAPGNAVFFENVIEHLSVLNAVGPRNGDSRVEAKLCNVYKAIAKCEGKILTPLISVGIFNVRLETSLQCLLKTVNDRGLNVFVYTDQERQTIENFFSCSIPVNVTEDNVNHERVSVSFDKTYGEQLKGTVVIKDKDVTNQLPSAFDVGQKVIKAIDIDWQAHYGFRDAAAFSASSHDAYKFEVVTHSNFIVHKQTDNNCWINAICLALQRLKPQWKFPGVRGLWNEFLERKTQGFVHMLYHISGVKKGEPGDAELMLHKLGDLMDNDCEIIVTHTTACDKCAKVEKFVGPVVAAPLAIHGTDETCVHGVSVNVKVTQIKGTVAITSLIGPIIGEVLEATGYICYSGSNRNGHYTYYDNRNGLVVDAEKAYHFNRDLLQVTTAIASNFVVKKPQAEERPKNCAFNKVAASPKIVQEQKLLAIESGANYALTEFGRYADMFFMAGDKILRLLLEVFKYLLVLFMCLRSTKMPKVKVKPPLAFKDFGAKVRTLNYMRQLNKPSVWRYAKLVLLLIAIYNFFYLFVSIPVVHKLTCNGAVQAYKNSSFIKSAVCGNSILCKACLASYDELADFQHLQVTWDFKSDPLWNRLVQLSYFAFLAVFGNNYVRCFLMYFVSQYLNLWLSYFGYVEYSWFLHVVNFESISAEFVIVVIVVKAVLALKHIVFACSNPSCKTCSRTARQTRIPIQVVVNGSMKTVYVHANGTGKFCKKHNFYCKNCDSYGFENTFICDEIVRDLSNSVKQTVYATDRSHQEVTKVECSDGFYRFYVGDEFTSYDYDVKHKKYSSQEVLKSMLLLDDFIVYSPSGSALANVRNACVYFSQLIGKPIKIVNSDLLEDLSVDFKGALFNAKKNVIKNSFNVDVSECKNLDECYRACNLNVSFSTFEMAVNNAHRFGILITDRSFNNFWPSKVKPGSSGVSAMDIGKCMTSDAKIVNAKVLTQRGKSVVWLSQDFAALSSTAQKVLVKTFVEEGVNFSLTFNAVGSDDDLPYERFTESVSPKSGSGFFDVITQLKQIVILVFVFIFICGLCSVYSVATQSYIESAEGYDYMVIKNGIVQPFDDTISCVHNTYKGFGDWFKAKYGFIPTFGKSCPIVVGTVFDLENMRPIPDVPAYVSIVGRSLVFAINAAFGVTNMCYDHTGNAVSKDSYFDTCVFNTACTTLTGLGGTIVYCAKQGLVEGAKLYSDLMPDYYYEHASGNMVKLPAIIRGLGLRFVKTQATTYCRVGECIDSKAGFCFGGDNWFVYDNEFGNGYICGNSVLGFFKNVFKLFNSNMSVVATSGAMLVNIIIACLAIAMCYGVLKFKKIFGDCTFLIVMIIVTLVVNNVSYFVTQNTFFMIIYAIVYYFITRKLAYPGILDAGFIIAYINMAPWYVITAYILVFLYDSLPSLFKLKVSTNLFEGDKFVGNFESAAMGTFVIDMRSYETIVNSTSIARIKSYANSFNKYKYYTGSMGEADYRMACYAHLGKALMDYSVNRTDMLYTPPTVSVNSTLQSGLRKMAQPSGLVEPCIVRVSYGNNVLNGLWLGDEVICPRHVIASDTTRVINYENEMSSVRLHNFSVSKNNVFLGVVSARYKGVNLVLKVNQVNPNTPEHKFKSIKAGESFNILACYEGCPGSVYGVNMRSQGTIKGSFIAGTCGSVGYVLENGILYFVYMHHLELGNGSHVGSNFEGEMYGGYEDQPSMQLEGTNVMSSDNVVAFLYAALINGERWFVTNTSMSLESYNTWAKTNSFTELSSTDAFSMLAAKTGQSVEKLLDSIVRLNKGFGGRTILSYGSLCDEFTPTEVIRQMYGVNLQAGKVKSFFYPIMTAMTILFAFWLEFFMYTPFTWINPTFVSIVLAVTTLISTVFVSGIKHKMLFFMSFVLPSVILVTAHNLFWDFSYYESLQSIVENTNTMFLPVDMQGVMLTVFCFIVFVTYSVRFFTCKQSWFSLAVTTILVIFNMVKIFGTSDEPWTENQIAFCFVNMLTMIVSLTTKDWMVVIASYRIAYYIVVCVMPSAFVSDFGFMKCISIVYMACGYLFCCYYGILYWVNRFTCMTCGVYQFTVSAAELKYMTANNLSAPKNAYDAMILSAKLIGVGGKRNIKISTVQSKLTEMKCTNVVLLGLLSKMHVESNSKEWNYCVGLHNEINLCDDPEIVLEKLLALIAFFLSKHNTCDLSELIESYFENTTILQSVASAYAALPSWIALEKARADLEEAKKNDVSPQILKQLTKAFNIAKSDFEREASVQKKLDKMAEQAAASMYKEARAVDRKSKIVSAMHSLLFGMLKKLDMSSVNTIIDQARNGVLPLSIIPAASATRLVVITPSLEVFSKIRQENNVHYAGAIWTIVEVKDANGSHVHLKEVTAANELNLTWPLSITCERTTKLQNNEIMPGKLKERAVRASATLDGEAFGSGKALMASESGKSFMYAFIASDNNLKYVKWESNNDIIPIELEAPLRFYVDGANGPEVKYLYFVKNLNTLRRGAVLGYIGATVRLQAGKPTEHPSNSSLLTLCAFSPDPAKAYVDAVKRGMQPVNNCVKMLSNGAGNGMAVTNGVEANTQQDSYGGASVCIYCRCHVEHPAIDGLCRYKGKFVQIPTGTQDPIRFCIENEVCVVCGCWLNNGCMCDRTSMQSFTVDQSYLNRVRGSSAARLEPCNGTDPDHVSRAFDIYNKDVACIGKFLKTNCSRFRNLDKHDAYYIVKRCTKTVMDHEQVCYNDLKDSGAVAEHDFFTYKEGRCEFGNVARRNLTKYTMMDLCYAIRNFDEKNCEVLKEILVTVGACTEEFFENKDWFDPVENEAIHEVYAKLGPIVANAMLKCVAFCDAIVEKGYIGVITLDNQDLNGNFYDFGDFVKTAPGFGCACVTSYYSYMMPLMGMTSCLESENFVKSDIYGSDYKQYDLLAYDFTEHKEYLFQKYFKYWDRTYHPNCSDCTSDECIIHCANFNTLFSMTIPMTAFGPLVRKVHIDGVPVVVTAGYHFKQLGIVWNLDVKLDTMKLSMTDLLRFVTDPTLLVASSPALLDQRTVCFSIAALSTGITYQTVKPGHFNKDFYDFITERGFFEEGSELTLKHFFFAQGGEAAMTDFNYYRYNRVTVLDICQAQFVYKIVGKYFECYDGGCINAREVVVTNYDKSAGYPLNKFGKARLYYETLSYEEQDALFALTKRNVLPTMTQMNLKYAISGKARARTVGGVSLLSTMTTRQYHQKHLKSIAATRNATVVIGSTKFYGGWDNMLKNLMRDVDNGCLMGWDYPKCDRALPNMIRMASAMILGSKHVGCCTHNDRFYRLSNELAQVLTEVVHCTGGFYFKPGGTTSGDGTTAYANSAFNIFQAVSANVNKLLGVDSNACNNVTVKSIQRKIYDNCYRSSSIDEEFVVEYFSYLRKHFSMMILSDDGVVCYNKDYADLGYVADINAFKATLYYQNNVFMSTSKCWVEPDLSVGPHEFCSQHTLQIVGPDGDYYLPYPDPSRILSAGVFVDDIVKTDNVIMLERYVSLAIDAYPLTKHPKPAYQKVFYTLLDWVKHLQKNLNAGVLDSFSVTMLEEGQDKFWSEEFYASLYEKSTVLQAAGMCVVCGSQTVLRCGDCLRRPLLCTKCAYDHVMGTKHKFIMSITPYVCSFNGCNVNDVTKLFLGGLSYYCMNHKPQLSFPLCANGNVFGLYKSSAVGSEAVEDFNKLAVSDWTNVEDYKLANNVKESLKIFAAETVKAKEESVKSEYAYAVLKEVIGPKEIVLQWEASKTKPPLNRNSVFTCFQISKDTKIQLGEFVFEQSEYGSDSVYYKSTSTYKLTPGMIFVLTSHNVSPLKAPILVNQEKYNTISKLYPVFNIAEAYNTLVPYYQMIGKQKFTTIQGPPGSGKSHCVIGLGLYYPQARIVYTACSHAAVDALCEKAAKNFNVDRCSRIIPQRIRVDCYTGFKPNNTNAQYLFCTVNALPEASCDIVVVDEVSMCTNYDLSVINSRLSYKHIVYVGDPQQLPAPRTLINKGVLQPQDYNVVTKRMCTLGPDVFLHKCYRCPAEIVKTVSALVYENKFVPVNPESKQCFKMFVKGQVQIESNSSINNKQLEVVKAFLAHNPKWRKAVFISPYNSQNYVARRLLGLQTQTVDSAQGSEYDYVIYTQTSDTQHATNVNRFNVAITRAKVGILCIMCDRTMYENLDFYELKDSKIGLQAKPETCGLFKDCSKSEQYIPPAYATTYMSLSDNFKTSDGLAVNIGTKDVKYANVISYMGFRFEANIPGYHTLFCTRDFAMRNVRAWLGFDVEGAHVCGDNVGTNVPLQLGFSNGVDFVVQTEGCVITEKGNSIEVVKARAPPGEQFAHLIPLMRKGQPWHIVRRRIVQMVCDYFDGLSDILIFVLWAGGLELTTMRYFVKIGRPQKCECGKSATCYSSSQSVYACFKHALGCDYLYNPYCIDIQQWGYTGSLSMNHHEVCNIHRNEHVASGDAIMTRCLAIHDCFVKRVDWSIVYPFIDNEEKINKAGRIVQSHVMKAALKIFNPAAIHDVGNPKGIRCATTPIPWFCYDRDPINNNVRCLDYDYMVHGQMNGLMLFWNCNVDMYPEFSIVCRFDTRTRSKLSLEGCNGGALYVNNHAFHTPAYDRRAFAKLKPMPFFYYDDSNCELVDGQPNYVPLKSNVCITKCNIGGAVCKKHAALYRAYVEDYNIFMQAGFTIWCPQNFDTYMLWHGFVNSKALQSLENVAFNVVKKGAFTGLKGDLPTAVIADKIMVRDGPTDKCIFTNKTSLPTNVAFELYAKRKLGLTPPLTILRNLGVVATYKFVLWDYEAERPFSNFTKQVCSYTDLDSEVVTCFDNSIAGSFERFTTTRDAVLISNNAVKGLSAIKLQYGLLNDLPVSTVGNKPVTWYIYVRKNGEYVEQIDSYYTQGRTFETFKPRSTMEEDFLSMDTTLFIQKYGLEDYGFEHVVFGDVSKTTIGGMHLLISQVRLAKMGLFSVQEFMNNSDSTLKSCCITYADDPSSKNVCTYMDILLDDFVTIIKSLDLNVVSKVVDVIVDCKAWRWMLWCENSHIKTFYPQLQSAEWNPGYSMPTLYKIQRMCLERCNLYNYGAQVKLPDGITTNVVKYTQLCQYLNTTTLCVPHKMRVLHLGAAGASGVAPGSTVLRRWLPDDAILVDNDLRDYVSDADFSVTGDCTSLYIEDKFDLLVSDLYDGSTKSIDGENTSKDGFFTYINGFIKEKLSLGGSVAIKITEFSWNKDLYELIQRFEYWTVFCTSVNTSSSEGFLIGINYLGPYCDKAIVDGNIMHANYIFWRNSTIMALSHNSVLDTPKFKCRCNNALIVNLKEKELNEMVIGLLRKGKLLIRNNGKLLNFGNHFVNTP.

Residues 2–108 (SSKQFKILVN…DFDLKIARTG (107 aa)) form the CoV Nsp1 globular domain. Residues 111 to 349 (AIYVDQYMCG…KSLVACSVKR (239 aa)) form the CoV Nsp2 N-terminal domain. 4 residues coordinate Zn(2+): C240, C242, C259, and C260. The segment at 240–260 (CPCGSESSGVGDWTGFKTACC) is C4. The CoV Nsp2 middle domain occupies 378–773 (NVGLLFKKTP…CNAARNDIEI (396 aa)). One can recognise a CoV Nsp2 C-terminal domain in the interval 768–879 (RNDIEIGGIP…VQRMYNKMGG (112 aa)). Residues 882–983 (KTVSFSEEVD…DGIMISQYDI (102 aa)) enclose the Ubiquitin-like 1 domain. The disordered stretch occupies residues 989 to 1032 (EKSEVSASSEEEEVESVEEDPENEIVEASEGAEGTSSQEEVETV). Residues 997–1015 (SEEEEVESVEEDPENEIVE) are compositionally biased toward acidic residues. Residues 1055 to 1299 (PWAAAVDVQE…FKVEKVEQQP (245 aa)) enclose the Peptidase C16 1 domain. C1093 (for PL1-PRO activity) is an active-site residue. The C4-type 1; degenerate zinc-finger motif lies at 1164-1195 (CGCGEKEIVLERAVFKLTPLKESFNYGVCGDC). Residues H1244 and D1257 each act as for PL1-PRO activity in the active site. A Macro domain is found at 1318–1489 (NDDLILPFYK…TIENFFSCSI (172 aa)). The 57-residue stretch at 1486 to 1542 (SCSIPVNVTEDNVNHERVSVSFDKTYGEQLKGTVVIKDKDVTNQLPSAFDVGQKVIK) folds into the Ubiquitin-like 2 domain. Positions 1550–1803 (AHYGFRDAAA…KVAASPKIVQ (254 aa)) constitute a Peptidase C16 2 domain. C1588 acts as the For PL2-PRO activity in catalysis. Zn(2+) contacts are provided by C1667, C1670, C1694, and H1696. The C4-type 2; atypical zinc-finger motif lies at 1667–1696 (CDKCAKVEKFVGPVVAAPLAIHGTDETCVH). Residues H1741 and D1754 each act as for PL2-PRO activity in the active site. Residues 1896 to 1916 (LVLLLIAIYNFFYLFVSIPVV) form a helical membrane-spanning segment. The interval 1896 to 2053 (LVLLLIAIYN…LALKHIVFAC (158 aa)) is HD1. Residues 1905 to 1970 (NFFYLFVSIP…LQVTWDFKSD (66 aa)) enclose the 3Ecto domain. 2 disulfide bridges follow: C1921–C1948 and C1939–C1945. The next 2 helical transmembrane spans lie at 1995 to 2015 (CFLM…FGYV) and 2033 to 2053 (FVIV…VFAC). Residues 2044-2134 (LALKHIVFAC…SVKQTVYATD (91 aa)) are Y1. The CoV Nsp3 Y domain maps to 2044 to 2384 (LALKHIVFAC…PYERFTESVS (341 aa)). H2048, C2053, C2058, C2061, C2094, H2097, C2101, and C2104 together coordinate Zn(2+). Residues 2048 to 2061 (HIVFACSNPSCKTC) form a ZF1 region. A ZF2 region spans residues 2094 to 2104 (CKKHNFYCKNC). Positions 2135–2224 (RSHQEVTKVE…IVNSDLLEDL (90 aa)) are Y2. Residues 2135–2384 (RSHQEVTKVE…PYERFTESVS (250 aa)) form a coV-Y region. The Y3 stretch occupies residues 2225 to 2281 (SVDFKGALFNAKKNVIKNSFNVDVSECKNLDECYRACNLNVSFSTFEMAVNNAHRFG). A Y4 region spans residues 2282-2384 (ILITDRSFNN…PYERFTESVS (103 aa)). Helical transmembrane passes span 2401–2421 (IVIL…YSVA), 2467–2487 (YGFI…VFDL), 2497–2517 (PAYV…AFGV), 2538–2558 (CVFN…VYCA), 2666–2686 (GAML…YGVL), 2695–2715 (CTFL…SYFV), 2721–2741 (FMII…YPGI), and 2746–2766 (FIIA…ILVF). The HD2 stretch occupies residues 2401–2766 (IVILVFVFIF…YVITAYILVF (366 aa)). The 96-residue stretch at 2783 to 2878 (LFEGDKFVGN…PTVSVNSTLQ (96 aa)) folds into the Nsp4C domain. Residues 2879–3180 (SGLRKMAQPS…IRQMYGVNLQ (302 aa)) enclose the Peptidase C30 domain. Residues H2919 and C3022 each act as for 3CL-PRO activity in the active site. The next 8 membrane-spanning stretches (helical) occupy residues 3187–3207 (FFYP…EFFM), 3217–3237 (TFVS…VSGI), 3242–3262 (LFFM…NLFW), 3280–3300 (MFLP…IVFV), 3313–3333 (WFSL…IFGT), 3347–3367 (FVNM…VVIA), 3371–3391 (IAYY…FGFM), and 3394–3414 (ISIV…ILYW). Positions 3187–3414 (FFYPIMTAMT…FCCYYGILYW (228 aa)) are HD3. Residues 3475–3557 (SKLTEMKCTN…SYFENTTILQ (83 aa)) enclose the RdRp Nsp7 cofactor domain. The 195-residue stretch at 3558 to 3752 (SVASAYAALP…ITCERTTKLQ (195 aa)) folds into the RdRp Nsp8 cofactor domain. The Nsp9 ssRNA-binding domain maps to 3753-3863 (NNEIMPGKLK…GYIGATVRLQ (111 aa)). The 141-residue stretch at 3864–4004 (AGKPTEHPSN…TSMQSFTVDQ (141 aa)) folds into the ExoN/MTase coactivator domain. Zn(2+) contacts are provided by C3937, C3940, H3946, C3953, C3979, C3982, C3990, and C3992. Zinc fingers lie at residues 3937-3953 (CIYC…DGLC) and 3979-3992 (CVVC…GCMC). The region spanning 4006-4255 (YLNRVRGSSA…ESENFVKSDI (250 aa)) is the NiRAN domain. In terms of domain architecture, Nsp12 Interface spans 4261-4359 (KQYDLLAYDF…WNLDVKLDTM (99 aa)). Positions 4290, 4296, 4301, 4305, and 4482 each coordinate Zn(2+). Residues 4360–4927 (KLSMTDLLRF…SLYEKSTVLQ (568 aa)) enclose the Nsp12 RNA-dependent RNA polymerase domain. Positions 4362–4576 (SMTDLLRFVT…HQKHLKSIAA (215 aa)) are rdRp Fingers N-ter. The interval 4577–4615 (TRNATVVIGSTKFYGGWDNMLKNLMRDVDNGCLMGWDYP) is rdRp Palm N-ter. The RdRp catalytic domain maps to 4607–4769 (GCLMGWDYPK…CYNKDYADLG (163 aa)). A rdRp Fingers C-ter region spans residues 4616–4674 (KCDRALPNMIRMASAMILGSKHVGCCTHNDRFYRLSNELAQVLTEVVHCTGGFYFKPGG). Zn(2+)-binding residues include H4637, C4640, and C4641. The segment at 4675–4810 (TTSGDGTTAY…SVGPHEFCSQ (136 aa)) is rdRp Palm C-ter. Catalysis depends on residues S4754, D4755, and D4756. Residues 4811-4927 (HTLQIVGPDG…SLYEKSTVLQ (117 aa)) are rdRp Thumb. The 113-residue stretch at 4928–5040 (AAGMCVVCGS…EDFNKLAVSD (113 aa)) folds into the CV ZBD domain. C4932, C4935, C4943, C4946, C4953, C4956, H4960, H4966, C4977, C4982, C4999, and H5002 together coordinate Zn(2+). The region spanning 5175–5366 (NTISKLYPVF…MCTLGPDVFL (192 aa)) is the (+)RNA virus helicase ATP-binding domain. Residue 5210–5217 (GPPGSGKS) coordinates ATP. The (+)RNA virus helicase C-terminal domain maps to 5367–5536 (HKCYRCPAEI…AKPETCGLFK (170 aa)). One can recognise an ExoN domain in the interval 5598-5812 (LFCTRDFAMR…RCLAIHDCFV (215 aa)). Residues D5616, E5618, and E5717 contribute to the active site. Residues C5733, C5735, C5751, H5754, H5782, C5786, and H5789 each contribute to the Zn(2+) site. Residues H5793 and D5798 contribute to the active site. C5804 provides a ligand contact to Zn(2+). The region spanning 5821–6042 (YPFIDNEEKI…MLWHGFVNSK (222 aa)) is the N7-MTase domain. 5856–5862 (DVGNPKG) lines the S-adenosyl-L-methionine pocket. The segment at 5933-5947 (CNGGALYVNNHAFHT) is gpppA-binding. Zn(2+)-binding residues include C5971, C5988, C5999, and H6002. Positions 6046 to 6106 (SLENVAFNVV…NVAFELYAKR (61 aa)) constitute a Nsp15 N-terminal oligomerization domain. The AV-Nsp11N/CoV-Nsp15M domain occupies 6107-6224 (KLGLTPPLTI…IYVRKNGEYV (118 aa)). A NendoU domain is found at 6241 to 6381 (KPRSTMEEDF…ENSHIKTFYP (141 aa)). Residues H6271, H6286, K6327, K6429, D6513, K6553, and E6586 contribute to the active site. One can recognise a Nidovirus-type SAM-dependent 2'-O-MTase domain in the interval 6385 to 6681 (SAEWNPGYSM…KLLNFGNHFV (297 aa)).

Belongs to the coronaviruses polyprotein 1ab family. 3CL-PRO exists as monomer and homodimer. Eight copies of nsp7 and eight copies of nsp8 assemble to form a heterohexadecamer. Nsp9 is a dimer. Nsp10 forms a dodecamer. It depends on Mn(2+) as a cofactor. Specific enzymatic cleavages in vivo by its own proteases yield mature proteins. 3CL-PRO is autocatalytically processed.

It is found in the host membrane. The protein localises to the host cytoplasm. It localises to the host perinuclear region. The protein resides in the host endoplasmic reticulum-Golgi intermediate compartment. The catalysed reaction is Thiol-dependent hydrolysis of ester, thioester, amide, peptide and isopeptide bonds formed by the C-terminal Gly of ubiquitin (a 76-residue protein attached to proteins as an intracellular targeting signal).. It carries out the reaction RNA(n) + a ribonucleoside 5'-triphosphate = RNA(n+1) + diphosphate. The enzyme catalyses ATP + H2O = ADP + phosphate + H(+). It catalyses the reaction a 5'-end diphospho-ribonucleoside in mRNA + GTP + H(+) = a 5'-end (5'-triphosphoguanosine)-ribonucleoside in mRNA + diphosphate. The catalysed reaction is a 5'-end (N(7)-methyl 5'-triphosphoguanosine)-ribonucleoside in mRNA + S-adenosyl-L-methionine = a 5'-end (N(7)-methyl 5'-triphosphoguanosine)-(2'-O-methyl-ribonucleoside) in mRNA + S-adenosyl-L-homocysteine + H(+). It carries out the reaction uridylyl-uridylyl-ribonucleotide-RNA = a 3'-end uridylyl-2',3'-cyclophospho-uridine-RNA + a 5'-end dephospho-ribonucleoside-RNA. The replicase polyprotein of coronaviruses is a multifunctional protein: it contains the activities necessary for the transcription of negative stranded RNA, leader RNA, subgenomic mRNAs and progeny virion RNA as well as proteinases responsible for the cleavage of the polyprotein into functional products. Functionally, non-structural protein 1 inhibits host translation. By suppressing host gene expression, nsp1 facilitates efficient viral gene expression in infected cells and evasion from host immune response. Its function is as follows. The papain-like proteinase 1 (PLP1) and papain-like proteinase 2 (PLP2) are responsible for the cleavages located at the N-terminus of the replicase polyprotein. In addition, PLP2 possesses a deubiquitinating/deISGylating activity and processes both 'Lys-48'- and 'Lys-63'-linked polyubiquitin chains from cellular substrates. PLP2 also antagonizes innate immune induction of type I interferon by blocking the nuclear translocation of host IRF-3. In terms of biological role, responsible for the majority of cleavages as it cleaves the C-terminus of replicase polyprotein at 11 sites. Recognizes substrates containing the core sequence [ILMVF]-Q-|-[SAGC]. Inhibited by the substrate-analog Cbz-Val-Asn-Ser-Thr-Leu-Gln-CMK. The helicase which contains a zinc finger structure displays RNA and DNA duplex-unwinding activities with 5' to 3' polarity. ATPase activity is strongly stimulated by poly(U), poly(dT), poly(C), poly(dA), but not by poly(G). Functionally, the exoribonuclease acts on both ssRNA and dsRNA in a 3' to 5' direction. Its function is as follows. Nsp7-nsp8 hexadecamer may possibly confer processivity to the polymerase, maybe by binding to dsRNA or by producing primers utilized by the latter. In terms of biological role, forms a primer, NSP9-pU, which is utilized by the polymerase for the initiation of RNA chains. Interacts with ribosome signal recognition particle RNA (SRP). Together with NSP8, suppress protein integration into the cell membrane, thereby disrupting host immune defenses. RNA-directed RNA polymerase that catalyzes the transcription of viral genomic and subgenomic RNAs. Acts in complex with nsp7 and nsp8 to transcribe both the minus and positive strands of genomic RNA. The kinase-like NiRAN domain of NSP12 attaches one or more nucleotides to the amino terminus of NSP9, forming a covalent RNA-protein intermediate that serves as transcription/replication primer. Subgenomic RNAs (sgRNAs) are formed by discontinuous transcription: The polymerase has the ability to pause at transcription-regulating sequences (TRS) and jump to the leader TRS, resulting in a major deletion. This creates a series of subgenomic RNAs that are replicated, transcribed and translated. In addition, Nsp12 is a subunit of the viral RNA capping enzyme that catalyzes the RNA guanylyltransferase reaction for genomic and sub-genomic RNAs. Subsequently, the NiRAN domain transfers RNA to GDP, and forms the core cap structure GpppA-RNA. Functionally, plays a role in viral transcription/replication and prevents the simultaneous activation of host cell dsRNA sensors, such as MDA5/IFIH1, OAS, and PKR. Acts by degrading the 5'-polyuridines generated during replication of the poly(A) region of viral genomic and subgenomic RNAs. Catalyzes a two-step reaction in which a 2'3'-cyclic phosphate (2'3'-cP) is first generated by 2'-O transesterification, which is then hydrolyzed to a 3'-phosphate (3'-P). If not degraded, poly(U) RNA would hybridize with poly(A) RNA tails and activate host dsRNA sensors. In Sus scrofa (Pig), this protein is Replicase polyprotein 1ab (rep).